Consider the following 663-residue polypeptide: Transcriptional repressor CTCFL (663 aa).

The span at Glu-24 to Arg-51 shows a compositional bias: basic and acidic residues. 2 disordered regions span residues Glu-24–Ala-55 and Asn-221–Thr-250. C2H2-type zinc fingers lie at residues Phe-257–His-279, His-285–His-307, Tyr-313–His-336, Phe-342–His-364, Phe-370–His-392, Tyr-398–His-421, Tyr-428–His-451, Leu-458–His-480, Phe-486–His-508, and Phe-514–His-537. Residues Tyr-546 to Cys-568 form a C2H2-type 11; atypical zinc finger. Residues Gly-569–Gly-630 are disordered. A compositionally biased stretch (basic residues) spans Lys-580–Thr-590. The span at Glu-594 to Lys-607 shows a compositional bias: basic and acidic residues. Positions Glu-608–Ala-620 are enriched in low complexity.

It belongs to the CTCF zinc-finger protein family. In terms of assembly, interacts with histones, PRMT7 and SETD1A. Interacts (via N-terminus) with BAG6/BAT3. As to expression, testis specific. Specifically expressed in primary spermatocytes.

The protein resides in the cytoplasm. Its subcellular location is the nucleus. Its function is as follows. Testis-specific DNA binding protein responsible for insulator function, nuclear architecture and transcriptional control, which probably acts by recruiting epigenetic chromatin modifiers. Plays a key role in gene imprinting in male germline, by participating in the establishment of differential methylation at the IGF2/H19 imprinted control region (ICR). Directly binds the unmethylated H19 ICR and recruits the PRMT7 methyltransferase, leading to methylate histone H4 'Arg-3' to form H4R3sme2. This probably leads to recruit de novo DNA methyltransferases at these sites. Seems to act as tumor suppressor. In association with DNMT1 and DNMT3B, involved in activation of BAG1 gene expression by binding to its promoter. Required for dimethylation of H3 lysine 4 (H3K4me2) of MYC and BRCA1 promoters. This chain is Transcriptional repressor CTCFL (CTCFL), found in Homo sapiens (Human).